The sequence spans 227 residues: 2-C-methyl-D-erythritol 4-phosphate cytidylyltransferase (227 aa).

Belongs to the IspD/TarI cytidylyltransferase family. IspD subfamily.

It catalyses the reaction 2-C-methyl-D-erythritol 4-phosphate + CTP + H(+) = 4-CDP-2-C-methyl-D-erythritol + diphosphate. It participates in isoprenoid biosynthesis; isopentenyl diphosphate biosynthesis via DXP pathway; isopentenyl diphosphate from 1-deoxy-D-xylulose 5-phosphate: step 2/6. In terms of biological role, catalyzes the formation of 4-diphosphocytidyl-2-C-methyl-D-erythritol from CTP and 2-C-methyl-D-erythritol 4-phosphate (MEP). This is 2-C-methyl-D-erythritol 4-phosphate cytidylyltransferase from Thermosipho melanesiensis (strain DSM 12029 / CIP 104789 / BI429).